Reading from the N-terminus, the 354-residue chain is DNA polymerase IV (354 aa).

A UmuC domain is found at 6–187; sequence IIHVDCDCFY…LPVARLHGVG (182 aa). Mg(2+)-binding residues include D10 and D105. E106 is a catalytic residue.

This sequence belongs to the DNA polymerase type-Y family. Monomer. Mg(2+) is required as a cofactor.

Its subcellular location is the cytoplasm. It carries out the reaction DNA(n) + a 2'-deoxyribonucleoside 5'-triphosphate = DNA(n+1) + diphosphate. Its function is as follows. Poorly processive, error-prone DNA polymerase involved in untargeted mutagenesis. Copies undamaged DNA at stalled replication forks, which arise in vivo from mismatched or misaligned primer ends. These misaligned primers can be extended by PolIV. Exhibits no 3'-5' exonuclease (proofreading) activity. May be involved in translesional synthesis, in conjunction with the beta clamp from PolIII. The polypeptide is DNA polymerase IV (Pseudomonas putida (strain ATCC 47054 / DSM 6125 / CFBP 8728 / NCIMB 11950 / KT2440)).